We begin with the raw amino-acid sequence, 245 residues long: AA9 family lytic polysaccharide monooxygenase B (245 aa).

The signal sequence occupies residues 1 to 18 (MKSAIFAAAVLGAAGVSA). Residues H19 and H105 each coordinate Cu(2+). A disulfide bridge connects residues C116 and C120. H179 and Q188 together coordinate O2. Y190 contributes to the Cu(2+) binding site.

Belongs to the polysaccharide monooxygenase AA9 family. The cofactor is Cu(2+).

It localises to the secreted. The catalysed reaction is [(1-&gt;4)-beta-D-glucosyl]n+m + reduced acceptor + O2 = 4-dehydro-beta-D-glucosyl-[(1-&gt;4)-beta-D-glucosyl]n-1 + [(1-&gt;4)-beta-D-glucosyl]m + acceptor + H2O.. Lytic polysaccharide monooxygenase (LPMO) that depolymerizes crystalline and amorphous polysaccharides via the oxidation of scissile alpha- or beta-(1-4)-glycosidic bonds, yielding C1 or C4 oxidation products. Catalysis by LPMOs requires the reduction of the active-site copper from Cu(II) to Cu(I) by a reducing agent and H(2)O(2) or O(2) as a cosubstrate. Active on hemicelluloses, including xylan, glucomannan, and xyloglucan. Has no activity on ivory nut mannan (INM), a linear beta-1,4-linked mannan without substitutions. This Malbranchea cinnamomea (Thermophilic fungus) protein is AA9 family lytic polysaccharide monooxygenase B.